A 223-amino-acid chain; its full sequence is ATP phosphoribosyltransferase (223 aa).

It belongs to the ATP phosphoribosyltransferase family. Short subfamily. In terms of assembly, heteromultimer composed of HisG and HisZ subunits.

The protein resides in the cytoplasm. The enzyme catalyses 1-(5-phospho-beta-D-ribosyl)-ATP + diphosphate = 5-phospho-alpha-D-ribose 1-diphosphate + ATP. Its pathway is amino-acid biosynthesis; L-histidine biosynthesis; L-histidine from 5-phospho-alpha-D-ribose 1-diphosphate: step 1/9. In terms of biological role, catalyzes the condensation of ATP and 5-phosphoribose 1-diphosphate to form N'-(5'-phosphoribosyl)-ATP (PR-ATP). Has a crucial role in the pathway because the rate of histidine biosynthesis seems to be controlled primarily by regulation of HisG enzymatic activity. The polypeptide is ATP phosphoribosyltransferase (Sphingopyxis alaskensis (strain DSM 13593 / LMG 18877 / RB2256) (Sphingomonas alaskensis)).